A 311-amino-acid polypeptide reads, in one-letter code: Cytosolic Fe-S cluster assembly factor Nubp1 homolog (311 aa).

The tract at residues 1 to 21 (MQAPPPEHCPGVESEDAGKGS) is disordered. [4Fe-4S] cluster-binding residues include Cys9, Cys23, Cys26, and Cys32. Residue 63–70 (GKGGVGKS) participates in ATP binding. The [4Fe-4S] cluster site is built by Cys240 and Cys243.

The protein belongs to the Mrp/NBP35 ATP-binding proteins family. NUBP1/NBP35 subfamily. Heterotetramer of 2 Nubp1 and 2 Nubp2 chains. [4Fe-4S] cluster is required as a cofactor.

The protein localises to the cytoplasm. Component of the cytosolic iron-sulfur (Fe/S) protein assembly (CIA) machinery. Required for maturation of extramitochondrial Fe-S proteins. The Nubp1-Nubp2 heterotetramer forms a Fe-S scaffold complex, mediating the de novo assembly of an Fe-S cluster and its transfer to target apoproteins. The protein is Cytosolic Fe-S cluster assembly factor Nubp1 homolog of Drosophila sechellia (Fruit fly).